The primary structure comprises 142 residues: Acidic phospholipase A2 KBf-grIB (142 aa).

Intrachain disulfides connect Cys-28–Cys-94, Cys-44–Cys-141, Cys-46–Cys-62, Cys-61–Cys-122, Cys-68–Cys-115, Cys-78–Cys-108, and Cys-101–Cys-113. Ca(2+)-binding residues include Tyr-45, Gly-47, and Gly-49. The active site involves His-65. Asp-66 contacts Ca(2+). Asp-116 is a catalytic residue.

Belongs to the phospholipase A2 family. Group I subfamily. D49 sub-subfamily. Ca(2+) is required as a cofactor. In terms of tissue distribution, expressed by the venom gland.

The protein localises to the secreted. The enzyme catalyses a 1,2-diacyl-sn-glycero-3-phosphocholine + H2O = a 1-acyl-sn-glycero-3-phosphocholine + a fatty acid + H(+). Functionally, PLA2 catalyzes the calcium-dependent hydrolysis of the 2-acyl groups in 3-sn-phosphoglycerides. The chain is Acidic phospholipase A2 KBf-grIB from Bungarus fasciatus (Banded krait).